The chain runs to 466 residues: Phytase A (466 aa).

The first 19 residues, 1-19 (MGFLAIVLSVALLFRSTSG), serve as a signal peptide directing secretion. A disulfide bond links cysteine 31 and cysteine 40. 5 residues coordinate 1D-myo-inositol hexakisphosphate: tyrosine 51, arginine 81, histidine 82, arginine 85, and threonine 88. Disulfide bonds link cysteine 71–cysteine 414, cysteine 215–cysteine 465, cysteine 264–cysteine 282, and cysteine 436–cysteine 444. The active-site Nucleophile is histidine 82. N-linked (GlcNAc...) asparagine glycosylation occurs at asparagine 120. Arginine 165 serves as a coordination point for 1D-myo-inositol hexakisphosphate. N-linked (GlcNAc...) asparagine glycans are attached at residues asparagine 207 and asparagine 230. Lysine 301 serves as a coordination point for 1D-myo-inositol hexakisphosphate. 2 N-linked (GlcNAc...) asparagine glycosylation sites follow: asparagine 339 and asparagine 352. Residues histidine 361 and aspartate 362 each contribute to the 1D-myo-inositol hexakisphosphate site. A glycan (N-linked (GlcNAc...) asparagine) is linked at asparagine 376.

This sequence belongs to the histidine acid phosphatase family. Monomer.

It localises to the secreted. The catalysed reaction is 1D-myo-inositol hexakisphosphate + H2O = 1D-myo-inositol 1,2,4,5,6-pentakisphosphate + phosphate. It carries out the reaction 1D-myo-inositol 1,2,4,5,6-pentakisphosphate + H2O = 1D-myo-inositol 1,2,5,6-tetrakisphosphate + phosphate. The enzyme catalyses 1D-myo-inositol 1,2,5,6-tetrakisphosphate + H2O = 1D-myo-inositol 1,2,6-trisphosphate + phosphate. It catalyses the reaction 1D-myo-inositol 1,2,6-trisphosphate + H2O = 1D-myo-inositol 1,2-bisphosphate + phosphate. The catalysed reaction is 1D-myo-inositol 1,2-bisphosphate + H2O = 1D-myo-inositol 2-phosphate + phosphate. Catalyzes the phosphate monoester hydrolysis of phytic acid (myo-inositol hexakisphosphate), which results in the stepwise formation of myo-inositol pentakis-, tetrakis-, tris-, bis-, and monophosphates, as well as the liberation of inorganic phosphate. Myo-inositol 2-monophosphate is the end product. Has a broad substrate specificity and is also able to dephosphorylate other classic acid phosphatase substrates such as p-nitrophenyl phosphate, phenyl phosphate, fructose 1,6-bisphosphate, glucose 6-phosphate, 3-phosphoglycerate, as well as ADP and ATP. In Aspergillus terreus, this protein is Phytase A.